The chain runs to 165 residues: Cyanate hydratase (165 aa).

Residues 1 to 20 are disordered; that stretch reads MAQNKANTVSQLQSLKNKSG. Active-site residues include Arg-90, Glu-93, and Ser-116.

It belongs to the cyanase family.

The enzyme catalyses cyanate + hydrogencarbonate + 3 H(+) = NH4(+) + 2 CO2. Catalyzes the reaction of cyanate with bicarbonate to produce ammonia and carbon dioxide. The polypeptide is Cyanate hydratase (Medicago truncatula (Barrel medic)).